The chain runs to 307 residues: Glycine--tRNA ligase alpha subunit (307 aa).

It belongs to the class-II aminoacyl-tRNA synthetase family. Tetramer of two alpha and two beta subunits.

It localises to the cytoplasm. The enzyme catalyses tRNA(Gly) + glycine + ATP = glycyl-tRNA(Gly) + AMP + diphosphate. This is Glycine--tRNA ligase alpha subunit from Aeromonas hydrophila subsp. hydrophila (strain ATCC 7966 / DSM 30187 / BCRC 13018 / CCUG 14551 / JCM 1027 / KCTC 2358 / NCIMB 9240 / NCTC 8049).